The chain runs to 362 residues: Trans-enoyl reductase phm4 (362 aa).

50 to 53 (VDAK) serves as a coordination point for NADP(+). A substrate-binding site is contributed by 136 to 143 (TCFMTCGL). NADP(+) contacts are provided by residues 171–174 (ATAT), 194–197 (SPHS), Y212, and 259–260 (LD). A substrate-binding site is contributed by 280–284 (GPIML). 349–350 (VN) is an NADP(+) binding site.

It belongs to the zinc-containing alcohol dehydrogenase family. In terms of assembly, monomer.

It participates in secondary metabolite biosynthesis. In terms of biological role, trans-enoyl reductase; part of the gene cluster that mediates the biosynthesis of the trans-fused decalin-containing tetramic acid phomasetin, the stereochemical opposite of the HIV-1 integrase inhibitor equisetin. The PKS module of phm1 together with the enoylreductase phm4 catalyze the formation of the polyketide unit which is then conjugated to L-serine by the condensation domain of the phm1 NRPS module. Activity of the Dieckmann cyclase domain (RED) of phm1 results in release of the Dieckmann product intermediate. The Diels-Alderase phm7 then uses the Dieckmann product of phm1 as substrate and catalyzes the Diels-Alder cycloaddition to form the decalin ring of N-desmethylphomasetin. N-desmethylphomasetin is further methylated to phomasetin by the methyltransferase phm5. The protein is Trans-enoyl reductase phm4 of Pyrenochaetopsis sp.